The following is a 470-amino-acid chain: Origin of replication complex subunit 4 (470 aa).

63-70 lines the ATP pocket; the sequence is GPRGCGKA.

Belongs to the ORC4 family. In terms of assembly, component of the origin recognition complex (ORC) composed of at least ORC1, ORC2, ORC3, ORC4, ORC5 and ORC6. ORC is regulated in a cell-cycle and development dependent manner. It is sequentially assembled at the exit from anaphase of mitosis and disassembled as cells enter S phase. As to expression, expressed in the shoot apical meristem (SAM), leaves, ears and roots (including root tips).

The protein resides in the nucleus. In terms of biological role, component of the origin recognition complex (ORC) that binds origins of replication. DNA-binding is ATP-dependent. The specific DNA sequences that define origins of replication have not been identified yet. ORC is required to assemble the pre-replication complex necessary to initiate DNA replication. The sequence is that of Origin of replication complex subunit 4 from Oryza sativa subsp. japonica (Rice).